The following is a 1169-amino-acid chain: Protein MBD-R2 (1169 aa).

Residues 5–59 form a THAP-type zinc finger; sequence CCVANCPSTSRLLEHNGVTYHSFPLDPIIRAIWIKNSRISLERQITKSVLVCSRH. Disordered stretches follow at residues 99–122, 140–211, and 347–394; these read RALQHASVEGTTETPGNAQSSTND, SAER…KYSN, and AEEG…CAPQ. Residues 107-122 are compositionally biased toward polar residues; it reads EGTTETPGNAQSSTND. A compositionally biased stretch (basic and acidic residues) spans 140-160; sequence SAERKATEEGKTGKAADDVKN. Residues 190–202 are compositionally biased toward low complexity; it reads PAPGSASSSNSPL. Positions 353–363 are enriched in polar residues; sequence KSPTPVGTPVS. The 70-residue stretch at 445–514 folds into the MBD domain; sequence KPTVIVQDWR…DVYDFSIHRR (70 aa). A disordered region spans residues 527–565; the sequence is GYNPQPPPKPRPMDVSMNSTLDQSITSQHSLPSTPMPVK. Polar residues predominate over residues 542–559; sequence SMNSTLDQSITSQHSLPS. A C2H2-type zinc finger spans residues 640-665; that stretch reads YVCPREDCAKTYRKEDFLLIHIRHYH. Residues 714–890 form a disordered region; sequence QDLQQSRSFK…INAALAPPPA (177 aa). Positions 726-742 are enriched in low complexity; it reads SVSATATSSTPSDITPT. The segment covering 774–784 has biased composition (polar residues); that stretch reads PTQSFNPSLSR. Positions 798-810 are enriched in basic residues; that stretch reads SGSRKSNRQRSQR. 2 stretches are compositionally biased toward polar residues: residues 853–862 and 869–881; these read AATTPISSID and SVSTPSSNDQTDI.

In terms of assembly, component of the non-specific lethal (NLS) histone acetyltransferase complex at least composed of mof, nls1, dgt1/NSL2, Rcd1/NSL3, Rcd5/MCRS2, MBD-R2 and wds.

It localises to the nucleus. The protein resides in the chromosome. Its function is as follows. Component of the non-specific lethal (NLS) complex, a multiprotein complex that promotes expression of housekeeping genes on X chromosome and autosomes. This chain is Protein MBD-R2, found in Drosophila melanogaster (Fruit fly).